Here is a 274-residue protein sequence, read N- to C-terminus: Nitrogenase iron protein (274 aa).

Residue 8–15 (GKGGIGKS) coordinates ATP. Cysteine 94 contacts [4Fe-4S] cluster. Arginine 97 bears the ADP-ribosylarginine; by dinitrogenase reductase ADP-ribosyltransferase mark. [4Fe-4S] cluster is bound at residue cysteine 131.

It belongs to the NifH/BchL/ChlL family. In terms of assembly, homodimer. The cofactor is [4Fe-4S] cluster. Post-translationally, the reversible ADP-ribosylation of Arg-97 inactivates the nitrogenase reductase and regulates nitrogenase activity.

It catalyses the reaction N2 + 8 reduced [2Fe-2S]-[ferredoxin] + 16 ATP + 16 H2O = H2 + 8 oxidized [2Fe-2S]-[ferredoxin] + 2 NH4(+) + 16 ADP + 16 phosphate + 6 H(+). Its function is as follows. The key enzymatic reactions in nitrogen fixation are catalyzed by the nitrogenase complex, which has 2 components: the iron protein and the molybdenum-iron protein. The protein is Nitrogenase iron protein of Solidesulfovibrio magneticus (strain ATCC 700980 / DSM 13731 / RS-1) (Desulfovibrio magneticus).